The primary structure comprises 296 residues: Acetylglutamate kinase (296 aa).

Substrate is bound by residues 65–66 (GG), R87, and N190.

It belongs to the acetylglutamate kinase family. ArgB subfamily.

It is found in the cytoplasm. It catalyses the reaction N-acetyl-L-glutamate + ATP = N-acetyl-L-glutamyl 5-phosphate + ADP. The protein operates within amino-acid biosynthesis; L-arginine biosynthesis; N(2)-acetyl-L-ornithine from L-glutamate: step 2/4. Catalyzes the ATP-dependent phosphorylation of N-acetyl-L-glutamate. This Moorella thermoacetica (strain ATCC 39073 / JCM 9320) protein is Acetylglutamate kinase.